Consider the following 158-residue polypeptide: 2-C-methyl-D-erythritol 2,4-cyclodiphosphate synthase (158 aa).

A divalent metal cation is bound by residues Asp8 and His10. 4-CDP-2-C-methyl-D-erythritol 2-phosphate contacts are provided by residues 8–10 (DVH) and 34–35 (HS). His42 contacts a divalent metal cation. 4-CDP-2-C-methyl-D-erythritol 2-phosphate contacts are provided by residues 56–58 (DIG), 61–65 (FPDDD), 132–135 (TTFE), and Phe139.

This sequence belongs to the IspF family. In terms of assembly, homotrimer. A divalent metal cation is required as a cofactor.

It catalyses the reaction 4-CDP-2-C-methyl-D-erythritol 2-phosphate = 2-C-methyl-D-erythritol 2,4-cyclic diphosphate + CMP. It participates in isoprenoid biosynthesis; isopentenyl diphosphate biosynthesis via DXP pathway; isopentenyl diphosphate from 1-deoxy-D-xylulose 5-phosphate: step 4/6. Functionally, involved in the biosynthesis of isopentenyl diphosphate (IPP) and dimethylallyl diphosphate (DMAPP), two major building blocks of isoprenoid compounds. Catalyzes the conversion of 4-diphosphocytidyl-2-C-methyl-D-erythritol 2-phosphate (CDP-ME2P) to 2-C-methyl-D-erythritol 2,4-cyclodiphosphate (ME-CPP) with a corresponding release of cytidine 5-monophosphate (CMP). The polypeptide is 2-C-methyl-D-erythritol 2,4-cyclodiphosphate synthase (Natranaerobius thermophilus (strain ATCC BAA-1301 / DSM 18059 / JW/NM-WN-LF)).